The primary structure comprises 305 residues: tRNA pseudouridine synthase B (305 aa).

The Nucleophile role is filled by D48.

This sequence belongs to the pseudouridine synthase TruB family. Type 1 subfamily.

The enzyme catalyses uridine(55) in tRNA = pseudouridine(55) in tRNA. Responsible for synthesis of pseudouridine from uracil-55 in the psi GC loop of transfer RNAs. This is tRNA pseudouridine synthase B from Pseudomonas syringae pv. syringae (strain B728a).